A 743-amino-acid chain; its full sequence is Cap-specific mRNA (nucleoside-2'-O-)-methyltransferase 2 (743 aa).

The Adrift-type SAM-dependent 2'-O-MTase domain maps to 113–326 (ELCTQAWAKF…LYIVCLDYQA (214 aa)). Lysine 121 is a catalytic residue. The S-adenosyl-L-methionine site is built by glycine 152, tryptophan 171, and aspartate 239. Aspartate 239 is a catalytic residue. Lysine 279 serves as the catalytic Proton acceptor.

It is found in the nucleus. It localises to the cytoplasm. The enzyme catalyses a 5'-end (N(7)-methyl 5'-triphosphoguanosine)-(2'-O-methyl-ribonucleoside)-(ribonucleotide) in mRNA + S-adenosyl-L-methionine = a 5'-end (N(7)-methyl 5'-triphosphoguanosine)-(2'-O-methyl-ribonucleoside)-(2'-O-methyl-ribonucleotide) in mRNA + S-adenosyl-L-homocysteine + H(+). Its function is as follows. S-adenosyl-L-methionine-dependent methyltransferase that mediates mRNA cap2 2'-O-ribose methylation to the 5'-cap structure of mRNAs. Methylates the ribose of the second nucleotide of a m(7)GpppG-capped mRNA and small nuclear RNA (snRNA) (cap0) to produce m(7)GpppRmpNm (cap2). This chain is Cap-specific mRNA (nucleoside-2'-O-)-methyltransferase 2 (cmtr2), found in Danio rerio (Zebrafish).